The chain runs to 846 residues: Putative transcriptional regulator tpeD (846 aa).

A BED-type; degenerate zinc finger spans residues 104 to 166 (KHQSECWQHF…NCRKSVPVSK (63 aa)). A disordered region spans residues 734 to 846 (RAREERDAQQ…RDEDFVYETP (113 aa)). A compositionally biased stretch (acidic residues) spans 756–769 (PISDSEEAESEDES). Positions 773-786 (PQSPQASQARSQRS) are enriched in low complexity. Over residues 797–809 (PLIELDGNEEDEV) the composition is skewed to acidic residues.

The protein localises to the nucleus. Functionally, putative transcriptional regulator; part of the gene cluster that mediates the biosynthesis of polyesters containing 2,4-dihydroxy-6-(2-hydroxypropyl)benzoate and 3-hydroxybutyrate moieties, such as talapolyester G, 15G256beta and 15G256beta-2; as well as to oxidized derivatives such as 15G256alpha. This chain is Putative transcriptional regulator tpeD, found in Talaromyces stipitatus (strain ATCC 10500 / CBS 375.48 / QM 6759 / NRRL 1006) (Penicillium stipitatum).